Consider the following 417-residue polypeptide: UDP-N-acetylglucosamine 1-carboxyvinyltransferase (417 aa).

22 to 23 contacts phosphoenolpyruvate; that stretch reads KN. A UDP-N-acetyl-alpha-D-glucosamine-binding site is contributed by Arg-91. The Proton donor role is filled by Cys-115. Residue Cys-115 is modified to 2-(S-cysteinyl)pyruvic acid O-phosphothioketal. UDP-N-acetyl-alpha-D-glucosamine-binding positions include 120 to 124, Asp-304, and Ile-326; that span reads RPVDL.

This sequence belongs to the EPSP synthase family. MurA subfamily.

The protein resides in the cytoplasm. It carries out the reaction phosphoenolpyruvate + UDP-N-acetyl-alpha-D-glucosamine = UDP-N-acetyl-3-O-(1-carboxyvinyl)-alpha-D-glucosamine + phosphate. The protein operates within cell wall biogenesis; peptidoglycan biosynthesis. In terms of biological role, cell wall formation. Adds enolpyruvyl to UDP-N-acetylglucosamine. The chain is UDP-N-acetylglucosamine 1-carboxyvinyltransferase from Nitratidesulfovibrio vulgaris (strain ATCC 29579 / DSM 644 / CCUG 34227 / NCIMB 8303 / VKM B-1760 / Hildenborough) (Desulfovibrio vulgaris).